Here is a 346-residue protein sequence, read N- to C-terminus: FMRFamide-related peptides type HF-1 (346 aa).

An N-terminal signal peptide occupies residues 1 to 19 (MTSLCLTIAPAVLSLICLS). Residues 20–45 (SYGWAEDNNGIHTLDDGDNDPFFRHN) constitute a propeptide that is removed on maturation. Position 51 is a phenylalanine amide (Phe-51). Positions 54–94 (AFVPLWDNADDSLVRKNLLTHWSEFPLSPALSSSDVFSRNS) are excised as a propeptide. Phe-100 is subject to Phenylalanine amide. Residues 103-109 (SYPPYQD) constitute a propeptide that is removed on maturation. Phe-115 bears the Phenylalanine amide mark. The propeptide occupies 118–203 (SHQPDIDEYL…EILSNEDDLE (86 aa)). Positions 137 to 185 (YRKRRSEDGDSKEDGLNRVARSADANQQSKNTQSNKFGKDLQKRETKKE) are disordered. Residues 141-152 (RSEDGDSKEDGL) show a composition bias toward basic and acidic residues. Residues 160 to 172 (DANQQSKNTQSNK) show a composition bias toward polar residues. Residues 173-185 (FGKDLQKRETKKE) are compositionally biased toward basic and acidic residues. A phenylalanine amide mark is found at Phe-209 and Phe-216. Positions 219–226 (GDEDESYD) are excised as a propeptide. Phe-232 carries the post-translational modification Phenylalanine amide. The propeptide occupies 235 to 243 (SLRHDQEFE). Phenylalanine amide is present on residues Phe-249 and Phe-256. Residues 259 to 267 (GDEDDAREE) constitute a propeptide that is removed on maturation. Position 273 is a phenylalanine amide (Phe-273). The propeptide occupies 276–283 (SSNEDEDI). Phe-290 carries the post-translational modification Phenylalanine amide. The propeptide occupies 293–301 (SGNEDGDVD). 2 positions are modified to phenylalanine amide: Phe-307 and Phe-314. A propeptide spanning residues 317-325 (SEKEDGDVD) is cleaved from the precursor. Phe-331 and Phe-338 each carry phenylalanine amide. Positions 341-346 (GDSETS) are excised as a propeptide.

The protein belongs to the FARP (FMRFamide related peptide) family. Central nervous system.

The protein resides in the secreted. Functionally, can function as both cardioregulatory hormones and transmitters and may regulate cardiovascular function. This is FMRFamide-related peptides type HF-1 from Cornu aspersum (Brown garden snail).